The chain runs to 628 residues: DNA mismatch repair protein MutL (628 aa).

The segment at 334 to 367 (SDFAQPSADNMPKPESPGAPAAHGRKDDAPAAHA) is disordered. The span at 357–367 (GRKDDAPAAHA) shows a compositional bias: basic and acidic residues.

Belongs to the DNA mismatch repair MutL/HexB family.

Its function is as follows. This protein is involved in the repair of mismatches in DNA. It is required for dam-dependent methyl-directed DNA mismatch repair. May act as a 'molecular matchmaker', a protein that promotes the formation of a stable complex between two or more DNA-binding proteins in an ATP-dependent manner without itself being part of a final effector complex. This Opitutus terrae (strain DSM 11246 / JCM 15787 / PB90-1) protein is DNA mismatch repair protein MutL.